The sequence spans 210 residues: Cdc42 effector protein 2 (210 aa).

Residue S2 is modified to N-acetylserine. Residues 30–44 (ISPPLGDFRHTIHIG) enclose the CRIB domain. 3 positions are modified to phosphoserine: S31, S101, and S141. The segment at 122–171 (PTAQAPPKPPRLHLETPQPSPQEGGSVDIWRIPETGSPNSGLTPESGAEE) is disordered.

This sequence belongs to the BORG/CEP family. In terms of assembly, interacts with RHOQ and CDC42 in a GTP-dependent manner, and with SEPT7. In terms of tissue distribution, highly expressed in the heart. Weakly expressed in the pancreas and liver.

It localises to the endomembrane system. The protein localises to the cytoplasm. Its subcellular location is the cytoskeleton. Its function is as follows. Probably involved in the organization of the actin cytoskeleton. May act downstream of CDC42 to induce actin filament assembly leading to cell shape changes. Induces pseudopodia formation in fibroblasts in a CDC42-dependent manner. This Homo sapiens (Human) protein is Cdc42 effector protein 2 (CDC42EP2).